Here is a 141-residue protein sequence, read N- to C-terminus: Hemoglobin subunit alpha (141 aa).

In terms of domain architecture, Globin spans 1–141 (VLSSKDKTNV…VSTVLTSKYR (141 aa)). Ser-3 carries the phosphoserine modification. At Lys-7 the chain carries N6-succinyllysine. Thr-8 carries the phosphothreonine modification. Lys-11 carries the post-translational modification N6-succinyllysine. An N6-acetyllysine; alternate modification is found at Lys-16. Lys-16 is subject to N6-succinyllysine; alternate. At Tyr-24 the chain carries Phosphotyrosine. An N6-succinyllysine modification is found at Lys-40. Phosphoserine is present on Ser-49. His-58 contributes to the O2 binding site. His-87 serves as a coordination point for heme b. Ser-102 is modified (phosphoserine). Thr-108 carries the post-translational modification Phosphothreonine. The residue at position 124 (Ser-124) is a Phosphoserine. Phosphothreonine is present on residues Thr-134 and Thr-137. The residue at position 138 (Ser-138) is a Phosphoserine.

Belongs to the globin family. As to quaternary structure, heterotetramer of two alpha chains and two beta chains. Red blood cells.

In terms of biological role, involved in oxygen transport from the lung to the various peripheral tissues. Its function is as follows. Hemopressin acts as an antagonist peptide of the cannabinoid receptor CNR1. Hemopressin-binding efficiently blocks cannabinoid receptor CNR1 and subsequent signaling. The chain is Hemoglobin subunit alpha (HBA) from Camelus dromedarius (Dromedary).